Consider the following 449-residue polypeptide: Probable glycine dehydrogenase (decarboxylating) subunit 1 (449 aa).

It belongs to the GcvP family. N-terminal subunit subfamily. The glycine cleavage system is composed of four proteins: P, T, L and H. In this organism, the P 'protein' is a heterodimer of two subunits.

It carries out the reaction N(6)-[(R)-lipoyl]-L-lysyl-[glycine-cleavage complex H protein] + glycine + H(+) = N(6)-[(R)-S(8)-aminomethyldihydrolipoyl]-L-lysyl-[glycine-cleavage complex H protein] + CO2. The glycine cleavage system catalyzes the degradation of glycine. The P protein binds the alpha-amino group of glycine through its pyridoxal phosphate cofactor; CO(2) is released and the remaining methylamine moiety is then transferred to the lipoamide cofactor of the H protein. This chain is Probable glycine dehydrogenase (decarboxylating) subunit 1, found in Oceanobacillus iheyensis (strain DSM 14371 / CIP 107618 / JCM 11309 / KCTC 3954 / HTE831).